The chain runs to 385 residues: 1-deoxy-D-xylulose 5-phosphate reductoisomerase (385 aa).

Residues threonine 10, glycine 11, serine 12, isoleucine 13, glycine 36, asparagine 38, and asparagine 122 each contribute to the NADPH site. Lysine 123 contributes to the 1-deoxy-D-xylulose 5-phosphate binding site. Glutamate 124 is an NADPH binding site. Residue aspartate 148 coordinates Mn(2+). The 1-deoxy-D-xylulose 5-phosphate site is built by serine 149, glutamate 150, serine 174, and histidine 197. Glutamate 150 contributes to the Mn(2+) binding site. Glycine 203 lines the NADPH pocket. 4 residues coordinate 1-deoxy-D-xylulose 5-phosphate: serine 210, asparagine 215, lysine 216, and glutamate 219. A Mn(2+)-binding site is contributed by glutamate 219.

Belongs to the DXR family. Requires Mg(2+) as cofactor. Mn(2+) serves as cofactor.

The enzyme catalyses 2-C-methyl-D-erythritol 4-phosphate + NADP(+) = 1-deoxy-D-xylulose 5-phosphate + NADPH + H(+). The protein operates within isoprenoid biosynthesis; isopentenyl diphosphate biosynthesis via DXP pathway; isopentenyl diphosphate from 1-deoxy-D-xylulose 5-phosphate: step 1/6. Functionally, catalyzes the NADPH-dependent rearrangement and reduction of 1-deoxy-D-xylulose-5-phosphate (DXP) to 2-C-methyl-D-erythritol 4-phosphate (MEP). The protein is 1-deoxy-D-xylulose 5-phosphate reductoisomerase of Citrifermentans bemidjiense (strain ATCC BAA-1014 / DSM 16622 / JCM 12645 / Bem) (Geobacter bemidjiensis).